The sequence spans 88 residues: Putative membrane protein insertion efficiency factor (88 aa).

This sequence belongs to the UPF0161 family.

Its subcellular location is the cell inner membrane. Could be involved in insertion of integral membrane proteins into the membrane. The sequence is that of Putative membrane protein insertion efficiency factor from Coxiella burnetii (strain Dugway 5J108-111).